The following is an 86-amino-acid chain: RNA-binding protein Hfq (86 aa).

The Sm domain maps to 9 to 68 (DPYLNTLRKEKVPVSIYLVNGIKLQGSIESFDQFVVLLKNTVSQMVYKHAISTVVPARPV). A disordered region spans residues 66 to 86 (RPVRLPSPTDSEHGDSEPGNA). Over residues 75 to 86 (DSEHGDSEPGNA) the composition is skewed to basic and acidic residues.

This sequence belongs to the Hfq family. Homohexamer.

RNA chaperone that binds small regulatory RNA (sRNAs) and mRNAs to facilitate mRNA translational regulation in response to envelope stress, environmental stress and changes in metabolite concentrations. Also binds with high specificity to tRNAs. This Pseudomonas putida (strain ATCC 700007 / DSM 6899 / JCM 31910 / BCRC 17059 / LMG 24140 / F1) protein is RNA-binding protein Hfq.